Here is a 488-residue protein sequence, read N- to C-terminus: GTPase Der (488 aa).

EngA-type G domains follow at residues proline 3–methionine 166 and isoleucine 199–threonine 372. GTP is bound by residues glycine 9–serine 16, aspartate 56–isoleucine 60, asparagine 118–aspartate 121, glycine 205–serine 212, aspartate 252–valine 256, and asparagine 317–aspartate 320. The region spanning arginine 373–aspartate 457 is the KH-like domain. A disordered region spans residues phenylalanine 460–lysine 488. The segment covering arginine 473 to lysine 488 has biased composition (basic residues).

The protein belongs to the TRAFAC class TrmE-Era-EngA-EngB-Septin-like GTPase superfamily. EngA (Der) GTPase family. Associates with the 50S ribosomal subunit.

Functionally, GTPase that plays an essential role in the late steps of ribosome biogenesis. The sequence is that of GTPase Der from Shewanella baltica (strain OS155 / ATCC BAA-1091).